A 122-amino-acid chain; its full sequence is Putative MOB kinase activator-like 2B (122 aa).

Residues His-69 and His-74 each contribute to the Zn(2+) site.

The protein belongs to the MOB1/phocein family.

The protein localises to the nucleus. Its subcellular location is the cytoplasm. It is found in the cytoskeleton. The protein resides in the phragmoplast. The chain is Putative MOB kinase activator-like 2B from Arabidopsis thaliana (Mouse-ear cress).